The following is a 732-amino-acid chain: Catalase-peroxidase (732 aa).

The interval 1-26 is disordered; that stretch reads MADNKKSPETGGITMQIPGKGRTNRD. Residues 96–219 constitute a cross-link (tryptophyl-tyrosyl-methioninium (Trp-Tyr) (with M-245)); sequence WHSAGTYRTF…LAAVQMGLIY (124 aa). The active-site Proton acceptor is H97. The tryptophyl-tyrosyl-methioninium (Tyr-Met) (with W-96) cross-link spans 219 to 245; it reads YVNPEGPDGNPDPVAAARDIREVFARM. H260 serves as a coordination point for heme b. The segment at 344 to 365 is disordered; sequence KPKGEAGAGTVPDPHDPKKRHA.

Belongs to the peroxidase family. Peroxidase/catalase subfamily. As to quaternary structure, homodimer or homotetramer. The cofactor is heme b. Formation of the three residue Trp-Tyr-Met cross-link is important for the catalase, but not the peroxidase activity of the enzyme.

It carries out the reaction H2O2 + AH2 = A + 2 H2O. The catalysed reaction is 2 H2O2 = O2 + 2 H2O. Bifunctional enzyme with both catalase and broad-spectrum peroxidase activity. The sequence is that of Catalase-peroxidase from Methanospirillum hungatei JF-1 (strain ATCC 27890 / DSM 864 / NBRC 100397 / JF-1).